We begin with the raw amino-acid sequence, 841 residues long: Protein translocase subunit SecA (841 aa).

Residues Gln-86, 104–108 (GEGKT), and Asp-493 each bind ATP. Residues 788 to 822 (EEVAEGKAVRPSANGQEDKKAKRKPVRKAENIGRN) form a disordered region. Zn(2+) is bound by residues Cys-825, Cys-827, Cys-836, and Cys-837.

The protein belongs to the SecA family. In terms of assembly, monomer and homodimer. Part of the essential Sec protein translocation apparatus which comprises SecA, SecYEG and auxiliary proteins SecDF. Other proteins may also be involved. Requires Zn(2+) as cofactor.

It localises to the cell membrane. The protein resides in the cytoplasm. It catalyses the reaction ATP + H2O + cellular proteinSide 1 = ADP + phosphate + cellular proteinSide 2.. Its function is as follows. Part of the Sec protein translocase complex. Interacts with the SecYEG preprotein conducting channel. Has a central role in coupling the hydrolysis of ATP to the transfer of proteins into and across the cell membrane, serving as an ATP-driven molecular motor driving the stepwise translocation of polypeptide chains across the membrane. This is Protein translocase subunit SecA from Shouchella clausii (strain KSM-K16) (Alkalihalobacillus clausii).